A 489-amino-acid chain; its full sequence is Trehalose-6-phosphate synthase (489 aa).

R22 serves as a coordination point for D-glucose 6-phosphate. 42-43 (GG) contacts UDP-alpha-D-glucose. 2 residues coordinate D-glucose 6-phosphate: Y94 and D148. Positions 290 and 295 each coordinate UDP-alpha-D-glucose. R328 lines the D-glucose 6-phosphate pocket. Position 393-397 (393-397 (LVAKE)) interacts with UDP-alpha-D-glucose.

This sequence belongs to the glycosyltransferase 20 family. In terms of assembly, homotetramer.

It carries out the reaction ADP-alpha-D-glucose + D-glucose 6-phosphate = alpha,alpha-trehalose 6-phosphate + ADP + H(+). It catalyses the reaction CDP-alpha-D-glucose + D-glucose 6-phosphate = alpha,alpha-trehalose 6-phosphate + CDP + H(+). The catalysed reaction is GDP-alpha-D-glucose + D-glucose 6-phosphate = alpha,alpha-trehalose 6-phosphate + GDP + H(+). The enzyme catalyses TDP-alpha-D-glucose + D-glucose 6-phosphate = 5-methyl-UDP + alpha,alpha-trehalose 6-phosphate + H(+). It carries out the reaction D-glucose 6-phosphate + UDP-alpha-D-glucose = alpha,alpha-trehalose 6-phosphate + UDP + H(+). It functions in the pathway glycan biosynthesis; trehalose biosynthesis. Its function is as follows. Probably involved in the osmoprotection via the biosynthesis of trehalose and in the production of glycogen and alpha-glucan via the TreS-Pep2 branch involved in the biosynthesis of maltose-1-phosphate (M1P). Catalyzes the transfer of glucose from UDP-glucose (UDP-Glc) to D-glucose 6-phosphate (Glc-6-P) to form trehalose-6-phosphate. Probably also able to use ADP-Glc, CDP-Glc, GDP-Glc and TDP-Glc as glucosyl donors. The sequence is that of Trehalose-6-phosphate synthase from Mycobacterium sp. (strain KMS).